Here is a 1203-residue protein sequence, read N- to C-terminus: Probable phospholipid-transporting ATPase 11 (1203 aa).

Residues 1–71 (MTKCRRRRLH…STKYTLASFI (71 aa)) lie on the Cytoplasmic side of the membrane. A helical membrane pass occupies residues 72–93 (PKSLFEQFRRVANFYFLVTGVL). The Extracellular segment spans residues 94–97 (SLTA). Residues 98–120 (LSPYSPISALLPLTFVIAASMVK) form a helical membrane-spanning segment. Over 121–303 (EAIEDWGRKK…SRIERKMDKI (183 aa)) the chain is Cytoplasmic. A helical transmembrane segment spans residues 304–325 (IYLMFGVVFLMSFIGSIVFGIE). Residues 326–363 (TREDRVRNGGRTERWYLRPDNADIFFDPDRAPMAAVYH) lie on the Extracellular side of the membrane. The helical transmembrane segment at 364–381 (FFTAVMLYSYFIPISLYV) threads the bilayer. The Cytoplasmic segment spans residues 382-921 (SIEIVKVLQS…HGHWCYSRIS (540 aa)). The active-site 4-aspartylphosphate intermediate is the Asp429. Mg(2+) contacts are provided by Asp866 and Asp870. The helical transmembrane segment at 922-941 (SMICYFFYKNITFGVTVFLY) threads the bilayer. The Extracellular portion of the chain corresponds to 942–955 (EAYTSFSAQPAYND). Residues 956 to 975 (WFLSLFNVFFSSLPVIALGV) traverse the membrane as a helical segment. Residues 976–1005 (FDQDVSARYCYKFPLLYQEGVQNLLFSWKR) lie on the Cytoplasmic side of the membrane. A helical membrane pass occupies residues 1006–1028 (IIGWMFNGVFTALAIFFLCKESL). Residues 1029-1041 (KHQLYNPNGKTAG) lie on the Extracellular side of the membrane. Residues 1042 to 1064 (REILGGTMYTCVVWVVNLQMALA) traverse the membrane as a helical segment. The Cytoplasmic segment spans residues 1065 to 1070 (ISYFTW). Residues 1071–1091 (LQHIVIWGSVAFWYIFLMIYG) traverse the membrane as a helical segment. Topologically, residues 1092-1108 (AITPSFSTDAYKVFIEA) are extracellular. The chain crosses the membrane as a helical span at residues 1109-1133 (LAPAPSYWLTTLFVMFFALIPFFVF). At 1134 to 1203 (KSVQMRFFPG…DQLNKNFIAF (70 aa)) the chain is on the cytoplasmic side.

This sequence belongs to the cation transport ATPase (P-type) (TC 3.A.3) family. Type IV subfamily.

It localises to the membrane. The enzyme catalyses ATP + H2O + phospholipidSide 1 = ADP + phosphate + phospholipidSide 2.. Functionally, involved in transport of phospholipids. The sequence is that of Probable phospholipid-transporting ATPase 11 from Arabidopsis thaliana (Mouse-ear cress).